We begin with the raw amino-acid sequence, 272 residues long: MSIQKQIMNDLHVKPSIDPKQEIEDRVNFLKQYLKKTGAKGFVLGISGGQDSTLAGRLAQLAAESIREEGGNAEFIAVRLPHGTQQDEDDAQMALKFIKPDKSWTFDIKSAVSAFTDQYKKDTGDQLSDFNKGNVKARMRMIAQYAIGGQEGLLVIGTDHAAEAVTGFFTKYGDGGADLLPLTGLTKRQGRRLLEELGAPERLYLKLPTADLLDEKPQQTDETELGITYNDIDDYLEGKDVSSEVIEALEKRYLSTEHKRQVPASMFDDWWK.

45 to 52 is a binding site for ATP; that stretch reads GISGGQDS. D51 lines the Mg(2+) pocket. R138 contributes to the deamido-NAD(+) binding site. T158 serves as a coordination point for ATP. E163 contributes to the Mg(2+) binding site. Residues K171 and D178 each coordinate deamido-NAD(+). Residues K187 and T209 each coordinate ATP. 258–259 contributes to the deamido-NAD(+) binding site; it reads HK.

The protein belongs to the NAD synthetase family. Homodimer.

The catalysed reaction is deamido-NAD(+) + NH4(+) + ATP = AMP + diphosphate + NAD(+) + H(+). It participates in cofactor biosynthesis; NAD(+) biosynthesis; NAD(+) from deamido-NAD(+) (ammonia route): step 1/1. Catalyzes the ATP-dependent amidation of deamido-NAD to form NAD. Uses ammonia as a nitrogen source. The chain is NH(3)-dependent NAD(+) synthetase from Bacillus velezensis (strain DSM 23117 / BGSC 10A6 / LMG 26770 / FZB42) (Bacillus amyloliquefaciens subsp. plantarum).